We begin with the raw amino-acid sequence, 417 residues long: NADH-quinone oxidoreductase subunit D (417 aa).

It belongs to the complex I 49 kDa subunit family. In terms of assembly, NDH-1 is composed of 14 different subunits. Subunits NuoB, C, D, E, F, and G constitute the peripheral sector of the complex.

The protein resides in the cell inner membrane. The catalysed reaction is a quinone + NADH + 5 H(+)(in) = a quinol + NAD(+) + 4 H(+)(out). In terms of biological role, NDH-1 shuttles electrons from NADH, via FMN and iron-sulfur (Fe-S) centers, to quinones in the respiratory chain. The immediate electron acceptor for the enzyme in this species is believed to be ubiquinone. Couples the redox reaction to proton translocation (for every two electrons transferred, four hydrogen ions are translocated across the cytoplasmic membrane), and thus conserves the redox energy in a proton gradient. The polypeptide is NADH-quinone oxidoreductase subunit D (Burkholderia ambifaria (strain ATCC BAA-244 / DSM 16087 / CCUG 44356 / LMG 19182 / AMMD) (Burkholderia cepacia (strain AMMD))).